Here is a 157-residue protein sequence, read N- to C-terminus: F-box protein SNE (157 aa).

Positions 24 to 70 constitute an F-box domain; that stretch reads PVFSINDHHDVLVEILRRLDGSSLCSAACVCRLWSAVARNDSIWEEL.

Part of a SCF (ASK-cullin-F-box) protein ligase complex. Interacts directly with SKP1A and SKP1B. In terms of tissue distribution, highly expressed in flowers and at much lower level in seedlings, rosette leaves and green siliques.

Its subcellular location is the nucleus. Its pathway is protein modification; protein ubiquitination. In terms of biological role, essential component of a SCF-type E3 ligase complex that positively regulates the gibberellin signaling pathway. Upon gibberellin treatment, such complex probably mediates the ubiquitination and subsequent degradation of DELLA proteins (GAI, RGA and RGL2), some repressors of the gibberellin pathway, leading to activate the pathway. Can partially complement the absence of GID2/SLY1. The protein is F-box protein SNE (SNE) of Arabidopsis thaliana (Mouse-ear cress).